Here is a 151-residue protein sequence, read N- to C-terminus: Large ribosomal subunit protein bL9 (151 aa).

The protein belongs to the bacterial ribosomal protein bL9 family.

In terms of biological role, binds to the 23S rRNA. The chain is Large ribosomal subunit protein bL9 from Lactobacillus delbrueckii subsp. bulgaricus (strain ATCC BAA-365 / Lb-18).